The sequence spans 467 residues: Ribulose bisphosphate carboxylase large chain (467 aa).

Substrate-binding residues include Xaa106 and Thr156. The active-site Proton acceptor is Lys158. Lys160 is a substrate binding site. The Mg(2+) site is built by Lys184, Asp186, and Glu187. At Lys184 the chain carries N6-carboxylysine. His276 serves as the catalytic Proton acceptor. Residues Arg277, His309, and Ser361 each contribute to the substrate site.

This sequence belongs to the RuBisCO large chain family. Type I subfamily. In terms of assembly, heterohexadecamer of 8 large chains and 8 small chains. Requires Mg(2+) as cofactor.

It is found in the plastid. The protein resides in the chloroplast. The enzyme catalyses 2 (2R)-3-phosphoglycerate + 2 H(+) = D-ribulose 1,5-bisphosphate + CO2 + H2O. The catalysed reaction is D-ribulose 1,5-bisphosphate + O2 = 2-phosphoglycolate + (2R)-3-phosphoglycerate + 2 H(+). Functionally, ruBisCO catalyzes two reactions: the carboxylation of D-ribulose 1,5-bisphosphate, the primary event in carbon dioxide fixation, as well as the oxidative fragmentation of the pentose substrate in the photorespiration process. Both reactions occur simultaneously and in competition at the same active site. The polypeptide is Ribulose bisphosphate carboxylase large chain (rbcL) (Chondrus crispus (Carrageen Irish moss)).